The following is a 288-amino-acid chain: MSYQPQTEAATSRFLNVEEAGKTLRIHFNDCGQGDETVVLLHGSGPGATGWANFSRNIDPLVEAGYRVILLDCPGWGKSDSIVNSGSRSDLNARILKSVVDQLDIAKIHLLGNSMGGHSSVAFTLNWPERVGKLVLMGGGTGGMSLFTPMPTEGIKRLNQLYRQPTIENLKLMMDIFVFDTSDLTDALFEARLNNMLSRRDHLENFVKSLEANPKQFPDFGPRLAEIKAQTLIVWGRNDRFVPMDAGLRLLSGIAGSELHIFRDCGHWAQWEHADAFNQLVLNFLARP.

The region spanning 38 to 273 (VVLLHGSGPG…DCGHWAQWEH (236 aa)) is the AB hydrolase-1 domain. His267 functions as the Proton acceptor in the catalytic mechanism.

Belongs to the AB hydrolase superfamily. MhpC family. Homodimer.

The catalysed reaction is (2Z,4E)-2-hydroxy-6-oxonona-2,4-dienedioate + H2O = (2Z)-2-hydroxypenta-2,4-dienoate + succinate + H(+). It carries out the reaction (2Z,4E,7E)-2-hydroxy-6-oxonona-2,4,7-trienedioate + H2O = (2Z)-2-hydroxypenta-2,4-dienoate + fumarate + H(+). Its pathway is aromatic compound metabolism; 3-phenylpropanoate degradation. In terms of biological role, catalyzes the cleavage of the C5-C6 bond of 2-hydroxy-6-oxononadienedioate and 2-hydroxy-6-oxononatrienedioate, a dienol ring fission product of the bacterial meta-cleavage pathway for degradation of phenylpropionic acid. The sequence is that of 2-hydroxy-6-oxononadienedioate/2-hydroxy-6-oxononatrienedioate hydrolase from Escherichia coli O139:H28 (strain E24377A / ETEC).